A 474-amino-acid polypeptide reads, in one-letter code: tRNA-2-methylthio-N(6)-dimethylallyladenosine synthase (474 aa).

One can recognise an MTTase N-terminal domain in the interval 3–120; the sequence is KKLLIKTWGC…LPEMIKQSQS (118 aa). Positions 12, 49, 83, 157, 161, and 164 each coordinate [4Fe-4S] cluster. The Radical SAM core domain maps to 143–375; that stretch reads RAEGATAFVS…QQQINAQAMR (233 aa). The region spanning 378–441 is the TRAM domain; it reads RLMLGTEQRV…ANSLRGEIVR (64 aa).

This sequence belongs to the methylthiotransferase family. MiaB subfamily. As to quaternary structure, monomer. [4Fe-4S] cluster is required as a cofactor.

It localises to the cytoplasm. It carries out the reaction N(6)-dimethylallyladenosine(37) in tRNA + (sulfur carrier)-SH + AH2 + 2 S-adenosyl-L-methionine = 2-methylsulfanyl-N(6)-dimethylallyladenosine(37) in tRNA + (sulfur carrier)-H + 5'-deoxyadenosine + L-methionine + A + S-adenosyl-L-homocysteine + 2 H(+). Its function is as follows. Catalyzes the methylthiolation of N6-(dimethylallyl)adenosine (i(6)A), leading to the formation of 2-methylthio-N6-(dimethylallyl)adenosine (ms(2)i(6)A) at position 37 in tRNAs that read codons beginning with uridine. The polypeptide is tRNA-2-methylthio-N(6)-dimethylallyladenosine synthase (Vibrio vulnificus (strain YJ016)).